The following is a 128-amino-acid chain: Glycine cleavage system H protein (128 aa).

The 83-residue stretch at threonine 25–arginine 107 folds into the Lipoyl-binding domain. Residue lysine 66 is modified to N6-lipoyllysine.

This sequence belongs to the GcvH family. The glycine cleavage system is composed of four proteins: P, T, L and H. (R)-lipoate serves as cofactor.

Functionally, the glycine cleavage system catalyzes the degradation of glycine. The H protein shuttles the methylamine group of glycine from the P protein to the T protein. The polypeptide is Glycine cleavage system H protein (Kocuria rhizophila (strain ATCC 9341 / DSM 348 / NBRC 103217 / DC2201)).